The following is a 443-amino-acid chain: Chromosome partition protein MukF (443 aa).

The interval 209-237 (LDETSGNLRELQDVLNASGDKLQSQLLRI) is leucine-zipper.

This sequence belongs to the MukF family. As to quaternary structure, interacts, and probably forms a ternary complex, with MukE and MukB via its C-terminal region. The complex formation is stimulated by calcium or magnesium. It is required for an interaction between MukE and MukB.

Its subcellular location is the cytoplasm. It localises to the nucleoid. Involved in chromosome condensation, segregation and cell cycle progression. May participate in facilitating chromosome segregation by condensation DNA from both sides of a centrally located replisome during cell division. Not required for mini-F plasmid partitioning. Probably acts via its interaction with MukB and MukE. Overexpression results in anucleate cells. It has a calcium binding activity. The chain is Chromosome partition protein MukF from Glaesserella parasuis serovar 5 (strain SH0165) (Haemophilus parasuis).